Reading from the N-terminus, the 134-residue chain is Arsenate reductase 2 (134 aa).

Active-site nucleophile residues include Cys11, Cys83, and Cys90. 2 cysteine pairs are disulfide-bonded: Cys11-Cys83 and Cys83-Cys90.

This sequence belongs to the low molecular weight phosphotyrosine protein phosphatase family. Thioredoxin-coupled ArsC subfamily.

Its subcellular location is the cytoplasm. The enzyme catalyses arsenate + [thioredoxin]-dithiol + H(+) = arsenite + [thioredoxin]-disulfide + H2O. Its function is as follows. Catalyzes the reduction of arsenate [As(V)] to arsenite [As(III)]. The polypeptide is Arsenate reductase 2 (Bacillus cereus (strain ATCC 10987 / NRS 248)).